Here is a 310-residue protein sequence, read N- to C-terminus: HPr kinase/phosphorylase (310 aa).

Catalysis depends on residues histidine 138 and lysine 159. ATP is bound at residue 153–160; the sequence is GKSGVGKS. Serine 160 serves as a coordination point for Mg(2+). The active-site Proton acceptor; for phosphorylation activity. Proton donor; for dephosphorylation activity is aspartate 177. Residues 201 to 210 are important for the catalytic mechanism of both phosphorylation and dephosphorylation; sequence LEIRGLGIIN. Mg(2+) is bound at residue glutamate 202. The active site involves arginine 243. Positions 264 to 269 are important for the catalytic mechanism of dephosphorylation; that stretch reads PVRPGR.

The protein belongs to the HPrK/P family. As to quaternary structure, homohexamer. Requires Mg(2+) as cofactor.

The catalysed reaction is [HPr protein]-L-serine + ATP = [HPr protein]-O-phospho-L-serine + ADP + H(+). It carries out the reaction [HPr protein]-O-phospho-L-serine + phosphate + H(+) = [HPr protein]-L-serine + diphosphate. Its function is as follows. Catalyzes the ATP- as well as the pyrophosphate-dependent phosphorylation of a specific serine residue in HPr, a phosphocarrier protein of the phosphoenolpyruvate-dependent sugar phosphotransferase system (PTS). HprK/P also catalyzes the pyrophosphate-producing, inorganic phosphate-dependent dephosphorylation (phosphorolysis) of seryl-phosphorylated HPr (P-Ser-HPr). The two antagonistic activities of HprK/P are regulated by several intracellular metabolites, which change their concentration in response to the absence or presence of rapidly metabolisable carbon sources (glucose, fructose, etc.) in the growth medium. Also phosphorylates/dephosphorylates the HPr-like catabolite repression protein crh on a specific serine residue. Therefore, by controlling the phosphorylation state of HPr and crh, HPrK/P is a sensor enzyme that plays a major role in the regulation of carbon metabolism and sugar transport: it mediates carbon catabolite repression (CCR), and regulates PTS-catalyzed carbohydrate uptake and inducer exclusion. The polypeptide is HPr kinase/phosphorylase (Bacillus velezensis (strain DSM 23117 / BGSC 10A6 / LMG 26770 / FZB42) (Bacillus amyloliquefaciens subsp. plantarum)).